Here is a 132-residue protein sequence, read N- to C-terminus: Small ribosomal subunit protein uS8 (132 aa).

Belongs to the universal ribosomal protein uS8 family. As to quaternary structure, part of the 30S ribosomal subunit. Contacts proteins S5 and S12.

Functionally, one of the primary rRNA binding proteins, it binds directly to 16S rRNA central domain where it helps coordinate assembly of the platform of the 30S subunit. In Streptococcus agalactiae serotype V (strain ATCC BAA-611 / 2603 V/R), this protein is Small ribosomal subunit protein uS8.